The following is a 386-amino-acid chain: Arginine biosynthesis bifunctional protein ArgJ (386 aa).

Residues threonine 148, lysine 170, threonine 181, glutamate 261, asparagine 381, and serine 386 each contribute to the substrate site. Threonine 181 acts as the Nucleophile in catalysis.

This sequence belongs to the ArgJ family. As to quaternary structure, heterotetramer of two alpha and two beta chains.

It is found in the cytoplasm. It carries out the reaction N(2)-acetyl-L-ornithine + L-glutamate = N-acetyl-L-glutamate + L-ornithine. The enzyme catalyses L-glutamate + acetyl-CoA = N-acetyl-L-glutamate + CoA + H(+). It participates in amino-acid biosynthesis; L-arginine biosynthesis; L-ornithine and N-acetyl-L-glutamate from L-glutamate and N(2)-acetyl-L-ornithine (cyclic): step 1/1. The protein operates within amino-acid biosynthesis; L-arginine biosynthesis; N(2)-acetyl-L-ornithine from L-glutamate: step 1/4. Catalyzes two activities which are involved in the cyclic version of arginine biosynthesis: the synthesis of N-acetylglutamate from glutamate and acetyl-CoA as the acetyl donor, and of ornithine by transacetylation between N(2)-acetylornithine and glutamate. This chain is Arginine biosynthesis bifunctional protein ArgJ, found in Corynebacterium diphtheriae (strain ATCC 700971 / NCTC 13129 / Biotype gravis).